The sequence spans 627 residues: Carene synthase 3, chloroplastic (627 aa).

A chloroplast-targeting transit peptide spans 1-36 (MSVISIVPLASKSCLYKSLMSSTHELKALCRPIATL). Asp-378, Asp-382, and Asp-530 together coordinate Mg(2+). The DDXXD motif signature appears at 378–382 (DDMYD).

This sequence belongs to the terpene synthase family. Tpsd subfamily. Requires Mg(2+) as cofactor. The cofactor is Mn(2+).

It is found in the plastid. The protein resides in the chloroplast. It catalyses the reaction (2E)-geranyl diphosphate = (+)-car-3-ene + diphosphate. It participates in terpene metabolism; oleoresin biosynthesis. Functionally, terpene synthase (TPS) involved in defensive oleoresin formation in conifers in response to insect attack or other injury. This chain is Carene synthase 3, chloroplastic (TPS-3car3), found in Picea sitchensis (Sitka spruce).